Reading from the N-terminus, the 81-residue chain is Putative membrane protein insertion efficiency factor (81 aa).

Residues 60–81 form a disordered region; it reads WNPGGYDPVPTHNTSNSSPMAE. A compositionally biased stretch (polar residues) spans 70–81; the sequence is THNTSNSSPMAE.

Belongs to the UPF0161 family.

The protein localises to the cell inner membrane. In terms of biological role, could be involved in insertion of integral membrane proteins into the membrane. The chain is Putative membrane protein insertion efficiency factor from Stutzerimonas stutzeri (strain A1501) (Pseudomonas stutzeri).